The following is a 170-amino-acid chain: Large ribosomal subunit protein uL18m (170 aa).

Belongs to the universal ribosomal protein uL18 family. In terms of assembly, component of the mitochondrial ribosome large subunit (39S) which comprises a 16S rRNA and about 50 distinct proteins.

It is found in the mitochondrion. The chain is Large ribosomal subunit protein uL18m (mrpl-18) from Caenorhabditis elegans.